We begin with the raw amino-acid sequence, 183 residues long: Adenylate kinase (183 aa).

Residue 12–17 participates in ATP binding; sequence GAGKGT. Positions 32–61 are NMP; it reads STGDLLRSEVSAGSALGQEAEAVMNRGELV. AMP-binding positions include Thr-33, Arg-38, 59 to 61, 86 to 89, and Gln-93; these read ELV and GFPR. Residues 127–133 are LID; that stretch reads ARGRADD. An ATP-binding site is contributed by Arg-128. Residues Arg-130 and Arg-141 each coordinate AMP. Residue Gly-169 participates in ATP binding.

The protein belongs to the adenylate kinase family. In terms of assembly, monomer.

The protein localises to the cytoplasm. It catalyses the reaction AMP + ATP = 2 ADP. It participates in purine metabolism; AMP biosynthesis via salvage pathway; AMP from ADP: step 1/1. Catalyzes the reversible transfer of the terminal phosphate group between ATP and AMP. Plays an important role in cellular energy homeostasis and in adenine nucleotide metabolism. The polypeptide is Adenylate kinase (Synechococcus sp. (strain WH7803)).